Reading from the N-terminus, the 1520-residue chain is Integrator complex subunit 3 homolog (1520 aa).

Disordered regions lie at residues Met-1–Thr-23, Gln-523–Val-671, Val-689–Thr-801, Asp-813–Lys-922, Phe-1116–Asn-1177, and Gln-1489–Glu-1520. Low complexity-rich tracts occupy residues Gln-527–Pro-549 and Gln-557–Pro-595. Over residues Pro-596–Gln-612 the composition is skewed to pro residues. A compositionally biased stretch (low complexity) spans Gln-613–Leu-625. Over residues Asn-626 to Met-639 the composition is skewed to polar residues. Low complexity-rich tracts occupy residues Ser-642 to Ser-669, Pro-694 to Leu-717, and Gln-725 to Gln-735. Positions Ile-736–Ser-752 are enriched in polar residues. Positions Ser-768 to Ile-789 are enriched in low complexity. The segment covering Ser-819–Ile-828 has biased composition (polar residues). A compositionally biased stretch (low complexity) spans Pro-837–Ile-882. The span at Gln-898 to Ser-918 shows a compositional bias: pro residues. Low complexity-rich tracts occupy residues Phe-1116 to Asn-1130 and Gln-1137 to Asn-1177. Polar residues predominate over residues Gln-1489–His-1504.

Belongs to the Integrator subunit 3 family. As to quaternary structure, component of the Integrator complex. The core complex associates with protein phosphatase 2A subunits, to form the Integrator-PP2A (INTAC) complex. Component of the SOSS complex.

It localises to the nucleus. It is found in the cytoplasm. Its function is as follows. Component of the integrator complex, a multiprotein complex that terminates RNA polymerase II (Pol II) transcription in the promoter-proximal region of genes. The integrator complex provides a quality checkpoint during transcription elongation by driving premature transcription termination of transcripts that are unfavorably configured for transcriptional elongation: the complex terminates transcription by (1) catalyzing dephosphorylation of the C-terminal domain (CTD) of Pol II subunit polr2a, (2) degrading the exiting nascent RNA transcript via endonuclease activity and (3) promoting the release of Pol II from bound DNA. The integrator complex is also involved in terminating the synthesis of non-coding Pol II transcripts, such as enhancer RNAs (eRNAs), small nuclear RNAs (snRNAs), telomerase RNAs and long non-coding RNAs (lncRNAs). Component of the SOSS complex, a multiprotein complex that functions downstream of the MRN complex to promote DNA repair and G2/M checkpoint. The SOSS complex associates with single-stranded DNA at DNA lesions and influences diverse endpoints in the cellular DNA damage response including cell-cycle checkpoint activation, recombinational repair and maintenance of genomic stability. The SOSS complex is required for efficient homologous recombination-dependent repair of double-strand breaks (DSBs) and ATM-dependent signaling pathways. In the SOSS complex, it is required for the assembly of the complex and for stabilization of the complex at DNA damage sites. This chain is Integrator complex subunit 3 homolog (ints3), found in Dictyostelium discoideum (Social amoeba).